A 177-amino-acid chain; its full sequence is Thioredoxin M-type, chloroplastic (177 aa).

The N-terminal 64 residues, 1-64, are a transit peptide targeting the chloroplast; sequence MAAFTCTSSP…SRLRRGGIIC (64 aa). The Thioredoxin domain maps to 65–177; that stretch reads EAQDTATGIP…LATSIDKFLQ (113 aa). Residues cysteine 101 and cysteine 104 each act as nucleophile in the active site. Cysteine 101 and cysteine 104 are joined by a disulfide.

It belongs to the thioredoxin family. Plant M-type subfamily. As to quaternary structure, forms a complex with heterodimeric ferredoxin-thioredoxin reductase (FTR) and ferredoxin.

It is found in the plastid. The protein localises to the chloroplast. In terms of biological role, participates in various redox reactions through the reversible oxidation of the active center dithiol to a disulfide. The M form is known to activate NADP-malate dehydrogenase. This Brassica napus (Rape) protein is Thioredoxin M-type, chloroplastic.